The sequence spans 101 residues: Signal recognition particle 19 kDa protein (101 aa).

This sequence belongs to the SRP19 family. Part of the signal recognition particle protein translocation system, which is composed of SRP and FtsY. Archaeal SRP consists of a 7S RNA molecule of 300 nucleotides and two protein subunits: SRP54 and SRP19.

The protein localises to the cytoplasm. Functionally, involved in targeting and insertion of nascent membrane proteins into the cytoplasmic membrane. Binds directly to 7S RNA and mediates binding of the 54 kDa subunit of the SRP. The chain is Signal recognition particle 19 kDa protein from Methanosarcina acetivorans (strain ATCC 35395 / DSM 2834 / JCM 12185 / C2A).